A 394-amino-acid chain; its full sequence is Methylthioribose kinase (394 aa).

Residues Asn-44, Lys-61, and 115–117 (EDL) each bind ATP. A substrate-binding site is contributed by Asp-233. An ATP-binding site is contributed by 250 to 252 (DPE). Arg-337 contributes to the substrate binding site.

It belongs to the methylthioribose kinase family. In terms of assembly, homodimer.

It catalyses the reaction 5-(methylsulfanyl)-D-ribose + ATP = 5-(methylsulfanyl)-alpha-D-ribose 1-phosphate + ADP + H(+). Its pathway is amino-acid biosynthesis; L-methionine biosynthesis via salvage pathway; S-methyl-5-thio-alpha-D-ribose 1-phosphate from S-methyl-5'-thioadenosine (hydrolase route): step 2/2. In terms of biological role, catalyzes the phosphorylation of methylthioribose into methylthioribose-1-phosphate. In Bacillus velezensis (strain DSM 23117 / BGSC 10A6 / LMG 26770 / FZB42) (Bacillus amyloliquefaciens subsp. plantarum), this protein is Methylthioribose kinase.